Here is a 143-residue protein sequence, read N- to C-terminus: AP-2 complex subunit sigma (143 aa).

Belongs to the adaptor complexes small subunit family. As to quaternary structure, adaptor protein complex 2 (AP-2) is a heterotetramer composed of two large adaptins (alpha-type subunit APL3 and beta-type subunit APL1), a medium chain (mu-type subunit APM4) and a small adaptin (sigma-type subunit APS2).

Its subcellular location is the cell membrane. The protein resides in the membrane. The protein localises to the coated pit. Component of the adaptor complexes which link clathrin to receptors in coated vesicles. Clathrin-associated protein complexes are believed to interact with the cytoplasmic tails of membrane proteins, leading to their selection and concentration. The polypeptide is AP-2 complex subunit sigma (APS2) (Gibberella zeae (strain ATCC MYA-4620 / CBS 123657 / FGSC 9075 / NRRL 31084 / PH-1) (Wheat head blight fungus)).